We begin with the raw amino-acid sequence, 341 residues long: Ribosomal RNA small subunit methyltransferase H (341 aa).

S-adenosyl-L-methionine-binding positions include 47–49 (GGY), Asp64, Phe91, Asp109, and Gln116. The interval 292–319 (VAASEEEASRNPRARSAKLRAGVRTEAP) is disordered.

The protein belongs to the methyltransferase superfamily. RsmH family.

The protein localises to the cytoplasm. The catalysed reaction is cytidine(1402) in 16S rRNA + S-adenosyl-L-methionine = N(4)-methylcytidine(1402) in 16S rRNA + S-adenosyl-L-homocysteine + H(+). Its function is as follows. Specifically methylates the N4 position of cytidine in position 1402 (C1402) of 16S rRNA. The chain is Ribosomal RNA small subunit methyltransferase H from Rhizobium meliloti (strain 1021) (Ensifer meliloti).